Reading from the N-terminus, the 1041-residue chain is Serine-repeat antigen protein 6 (1041 aa).

Positions 1–34 (MIFFNFKLNRMICPIFFLYIINVLFTQYFIKCEG) are cleaved as a signal peptide. Asn84 carries N-linked (GlcNAc...) asparagine glycosylation. Residues 101 to 111 (KVVSSSESGKG) show a composition bias toward low complexity. A disordered region spans residues 101 to 173 (KVVSSSESGK…TESSSETLNK (73 aa)). Polar residues predominate over residues 114–149 (VSHTKVTSEGLSDTQPNVTQSVSSSTHTPGSLDSTM). The N-linked (GlcNAc...) asparagine glycan is linked to Asn130. The span at 150–168 (STEQHSSVSQSSLPTESSS) shows a compositional bias: low complexity. Asn459 carries N-linked (GlcNAc...) asparagine glycosylation. The interval 500 to 577 (TLPSESPSES…GDTNYVYDFD (78 aa)) is disordered. Residues 502–515 (PSESPSESSSKSDS) are compositionally biased toward low complexity. Residues 521 to 545 (NDKDKNEDKDDMSKNSKEEFKNDDK) are compositionally biased toward basic and acidic residues. Residue Asn554 is glycosylated (N-linked (GlcNAc...) asparagine). Over residues 564-574 (NINNGDTNYVY) the composition is skewed to low complexity. A glycan (N-linked (GlcNAc...) asparagine) is linked at Asn583. Cys654 is a catalytic residue. N-linked (GlcNAc...) asparagine glycosylation occurs at Asn684. Catalysis depends on residues His820 and Asn845. The N-linked (GlcNAc...) asparagine glycan is linked to Asn984.

Belongs to the peptidase C1 family. Just prior to merozoite egress from host erythrocytes, proteolytically cleaved by SUB1 to generate the active 75kDa form.

It localises to the parasitophorous vacuole lumen. It is found in the parasitophorous vacuole membrane. Functionally, cysteine protease which plays an essential role in merozoite egress from host erythrocytes. May cleave host SPTB/beta spectrin and ANK1/ankyrin-1 which disrupts host erythrocyte actin cytoskeleton and leads to host erythrocyte cell membrane rupture. The chain is Serine-repeat antigen protein 6 from Plasmodium falciparum.